Consider the following 590-residue polypeptide: Proline--tRNA ligase (590 aa).

Belongs to the class-II aminoacyl-tRNA synthetase family. ProS type 1 subfamily. Homodimer.

Its subcellular location is the cytoplasm. It catalyses the reaction tRNA(Pro) + L-proline + ATP = L-prolyl-tRNA(Pro) + AMP + diphosphate. Catalyzes the attachment of proline to tRNA(Pro) in a two-step reaction: proline is first activated by ATP to form Pro-AMP and then transferred to the acceptor end of tRNA(Pro). As ProRS can inadvertently accommodate and process non-cognate amino acids such as alanine and cysteine, to avoid such errors it has two additional distinct editing activities against alanine. One activity is designated as 'pretransfer' editing and involves the tRNA(Pro)-independent hydrolysis of activated Ala-AMP. The other activity is designated 'posttransfer' editing and involves deacylation of mischarged Ala-tRNA(Pro). The misacylated Cys-tRNA(Pro) is not edited by ProRS. This chain is Proline--tRNA ligase, found in Leifsonia xyli subsp. xyli (strain CTCB07).